The following is a 450-amino-acid chain: MTGPPGNPAFATIHEFFPGNTFYNFECLRILSTAPYGGCDPAEFLTAIAAIKPSDPETWATAWSHAASQAERIAEDALARGDTLAARDAFLRASSYTRASGYMRINGPTLDRHDPRALPVARKTQALFRKALPFLDCDARIVDIPYRPTQYSKPVSLPGYVYIPSPQNRLPDGKIPVLLNTGGADSVQEELYYIHPQAGHARGYAVITFEGPGQGIVLREKGLYMRPDWEVVTGQVLDWLEGYAATLQQEEGLTLDLSRIAVVGASMGGYYALRAASDPRIKACLSIDPFYDMWDFGTRHISGLFMAAWTGGWVSDATIDRVIGAGMYLNFQLRWEVGVTTAFWGIESPSRILREMKRYSLQGGFLARVQCPVFVSGAGKSLYFDTEEHTMRVFGDLKHLGERRRTLWMPSRPEEGGLQAKIGAFGLVNTKAFGFLDGVFGVKRVLEAET.

Residue Ser266 is the Nucleophile of the active site.

Belongs to the AB hydrolase superfamily. FUS2 hydrolase family. As to quaternary structure, homodimer.

It participates in mycotoxin biosynthesis. Its function is as follows. Hydrolase; part of the gene cluster that mediates the biosynthesis of the cytotoxic leucine-containing cytochalasans, including aspochalasin C, aspochalasin E, TMC-169, flavichalasine F, aspergillin PZ, aspochalasin M and flavichalasine G. The first step in the pathway is catalyzed by the hybrid PKS-NRPS ffsA that utilizes 8 units of malonyl-CoA to iteratively assemble the octaketide chain before addition of L-leucine by the C-terminal NRPS modules. Because ffsA lacks a designated enoylreductase (ER) domain, the required activity is provided the enoyl reductase fssC. The methyltransferase (MT) domain of ffsA catalyzes the alpha-methylation at C10 and C14 using S-adenosyl-L-methionine as the methyl-donating cosubstrate. Reduction by the hydrolyase ffsE, followed by dehydration and intra-molecular Diels-Alder cyclization by the Diels-Alderase ffsF then yield the required isoindolone-fused macrocycle. A number of oxidative steps catalyzed by the tailoring cytochrome P450 monooxygenase ffsD, the FAD-linked oxidoreductase ffsJ and the short-chain dehydrogenase/reductase ffsI, are further required to afford the final products. This Aspergillus flavipes protein is Hydrolase ffsE.